The following is a 406-amino-acid chain: Solute carrier family 22 member 18 (406 aa).

The next 10 helical transmembrane spans lie at G8 to F28, V43 to F63, A85 to F105, L140 to T160, A168 to A188, F226 to I246, A258 to G278, L295 to F315, L316 to T336, and G374 to W394.

This sequence belongs to the major facilitator (TC 2.A.1) superfamily. Organic cation transporter (TC 2.A.1.19) family. As to quaternary structure, interacts with RNF167. In terms of tissue distribution, expressed at high levels in fetal and adult kidney and liver, and extraembryonic membranes (yolk sac). Expressed at moderate levels in intestine, heart, lung and testis.

The protein localises to the apical cell membrane. In terms of biological role, may act as a transporter of organic cations based on a proton efflux antiport mechanism. May play a role in the transport of chloroquine and quinidine-related compounds in kidney. Plays a role in the regulation of lipid metabolism. The sequence is that of Solute carrier family 22 member 18 (Slc67a1) from Mus musculus (Mouse).